The chain runs to 396 residues: S-arrestin (396 aa).

This sequence belongs to the arrestin family.

Functionally, arrestin is one of the major proteins of the ros (retinal rod outer segments); it binds to photoactivated-phosphorylated rhodopsin, thereby apparently preventing the transducin-mediated activation of phosphodiesterase. This is S-arrestin from Lithobates pipiens (Northern leopard frog).